Consider the following 362-residue polypeptide: MGNRTLEGCHVDSRMDHLFPPSLYIFVIGVGLPTNCLALWAAYRQVRQRNELGVYLMNLSIADLLYICTLPLWVDYFLHHDNWIHGPGSCKLFGFIFYTNIYISIAFLCCISVDRYLAVAHPLRFARLRRVKTAVAVSSVVWATELGANSAPLFHDELFRDRYNHTFCFEKFPMEGWVAWMNLYRVFVGFLFPWALMLLSYRGILRAVRGSVSTERQEKVKIKRLALSLIAIVLVCFAPYHVLLLSRSAVYLRRPRDCGFEERVFSAYHSSLAFTSLNCVADPILYCLVNEGARSDVAKALHHLLRFLASDKPQEMANASLTLETPLTSKRNSMAKAMAAGWVAAPLAQGDQVQLKMLPPAQ.

At 1 to 8 the chain is on the extracellular side; that stretch reads MGNRTLEG. Asn-3 carries an N-linked (GlcNAc...) asparagine glycan. A helical transmembrane segment spans residues 9–45; that stretch reads CHVDSRMDHLFPPSLYIFVIGVGLPTNCLALWAAYRQ. Disulfide bonds link Cys-9/Cys-258 and Cys-90/Cys-168. At 46–49 the chain is on the cytoplasmic side; sequence VRQR. Residues 50-80 traverse the membrane as a helical segment; the sequence is NELGVYLMNLSIADLLYICTLPLWVDYFLHH. Residues 81–85 are Extracellular-facing; the sequence is DNWIH. The chain crosses the membrane as a helical span at residues 86 to 121; the sequence is GPGSCKLFGFIFYTNIYISIAFLCCISVDRYLAVAH. Topologically, residues 122 to 129 are cytoplasmic; the sequence is PLRFARLR. A helical membrane pass occupies residues 130 to 156; sequence RVKTAVAVSSVVWATELGANSAPLFHD. The Extracellular segment spans residues 157-172; that stretch reads ELFRDRYNHTFCFEKF. Residues 157–172 form an extracellular loop 2 (ECL2) region; sequence ELFRDRYNHTFCFEKF. N-linked (GlcNAc...) asparagine glycosylation is present at Asn-164. The helical transmembrane segment at 173–210 threads the bilayer; that stretch reads PMEGWVAWMNLYRVFVGFLFPWALMLLSYRGILRAVRG. The Cytoplasmic segment spans residues 211 to 214; it reads SVST. Residues 215–250 traverse the membrane as a helical segment; sequence ERQEKVKIKRLALSLIAIVLVCFAPYHVLLLSRSAV. Residues 251-260 lie on the Extracellular side of the membrane; the sequence is YLRRPRDCGF. Residues 261-289 traverse the membrane as a helical segment; sequence EERVFSAYHSSLAFTSLNCVADPILYCLV. At 290-362 the chain is on the cytoplasmic side; it reads NEGARSDVAK…VQLKMLPPAQ (73 aa).

The protein belongs to the G-protein coupled receptor 1 family.

It localises to the cell membrane. Activated by a network of residues that connects an extracellular-facing cavity to Glu-145, a conserved charged residue buried in the transmembrane core of the receptor. Protonation likely drives conformational changes in extracellular loop 2 (ECL2), which stabilizes movement of transmembrane 3 (TM3) and a series of rearrangements that connect the extracellular-facing cavity to Glu-145, a residue only conserved in proton-sensing G-protein coupled receptors. In terms of biological role, proton-sensing G-protein coupled receptor activated by extracellular pH, which is required to monitor pH changes and generate adaptive reactions. Activated by an optimal pH of 6.8-7.2. Ligand binding causes a conformation change that triggers signaling via guanine nucleotide-binding proteins (G proteins) and modulates the activity of downstream effectors, such as adenylate cyclase. GPR4 is mainly coupled to G(s) G proteins and mediates activation of adenylate cyclase activity. May also couple with G(q) and G(12)/G(13) G proteins. Acts as a key regulator of respiratory sensitivity to CO2/H(+) in brain retrotrapezoid nucleus neurons: acts by mediating detection of protons generated by the formation of carbonic acid in the blood, an important mechanism to impulse to breathe. Also acts as a regulator of acid secretion in the kidney collecting duct by maintaining acid-base homeostasis in the kidney. Acidosis-induced GPR4 activation increases paracellular gap formation and permeability of vascular endothelial cells, possibly through the G(12)/G(13)/Rho GTPase signaling pathway. This is G-protein coupled receptor 4 (GPR4) from Bos taurus (Bovine).